We begin with the raw amino-acid sequence, 91 residues long: Small ribosomal subunit protein bS16 (91 aa).

It belongs to the bacterial ribosomal protein bS16 family.

The chain is Small ribosomal subunit protein bS16 from Enterococcus faecalis (strain ATCC 700802 / V583).